A 183-amino-acid polypeptide reads, in one-letter code: Ribosome-recycling factor (183 aa).

It belongs to the RRF family.

It is found in the cytoplasm. Responsible for the release of ribosomes from messenger RNA at the termination of protein biosynthesis. May increase the efficiency of translation by recycling ribosomes from one round of translation to another. This is Ribosome-recycling factor from Deinococcus deserti (strain DSM 17065 / CIP 109153 / LMG 22923 / VCD115).